The sequence spans 820 residues: SART-1 family protein DOT2 (820 aa).

3 stretches are compositionally biased toward basic and acidic residues: residues methionine 1–glycine 156, glutamate 210–arginine 219, and leucine 426–glutamate 445. 8 disordered regions span residues methionine 1–aspartate 177, glutamate 210–serine 248, glycine 420–glutamate 445, serine 523–valine 544, lysine 564–asparagine 617, lysine 657–arginine 678, lysine 729–glutamate 748, and glycine 762–proline 820. Serine 22 carries the post-translational modification Phosphoserine. Coiled-coil stretches lie at residues arginine 58–lysine 120, lysine 171–glutamine 235, and arginine 433–alanine 510. Residues threonine 525–threonine 543 are compositionally biased toward low complexity. Residues valine 582–glycine 591 are compositionally biased toward basic and acidic residues. Positions asparagine 596–serine 606 are enriched in acidic residues. 2 stretches are compositionally biased toward basic and acidic residues: residues serine 607–asparagine 617 and aspartate 665–arginine 678. Polar residues-rich tracts occupy residues methionine 733–glutamine 744 and glycine 767–phenylalanine 776. Positions glycine 792–glutamate 807 are enriched in basic and acidic residues.

Belongs to the SNU66/SART1 family. As to expression, expressed in lateral root cap, columella, meristem and quiescent center (QC). Expressed in young leaves.

It localises to the nucleus. In terms of biological role, plays a role in root, shoot and flower development. Probably required for normal root and shoot meristem organization and maintenance and the proper expression of PIN and PLT genes. Involved in leaf vasculature patterning. The polypeptide is SART-1 family protein DOT2 (Arabidopsis thaliana (Mouse-ear cress)).